We begin with the raw amino-acid sequence, 132 residues long: Small ribosomal subunit protein eS24 (132 aa).

A compositionally biased stretch (basic and acidic residues) spans 90 to 100 (RLARHGLFEKK). Residues 90-132 (RLARHGLFEKKKTSRKQRKERKNRMKKVRGTKKASVGASKKKD) form a disordered region. The segment covering 101–121 (KTSRKQRKERKNRMKKVRGTK) has biased composition (basic residues).

This sequence belongs to the eukaryotic ribosomal protein eS24 family. Component of the small ribosomal subunit.

Its subcellular location is the cytoplasm. In terms of biological role, component of the small ribosomal subunit. The ribosome is a large ribonucleoprotein complex responsible for the synthesis of proteins in the cell. Required for processing of pre-rRNA and maturation of 40S ribosomal subunits. This chain is Small ribosomal subunit protein eS24 (rps24), found in Takifugu rubripes (Japanese pufferfish).